A 998-amino-acid chain; its full sequence is SEC23-interacting protein (998 aa).

The tract at residues 1–363 (MADRKANGGG…YTEEFSEKLE (363 aa)) is interaction with SEC23A. The tract at residues 50-246 (LPGEDSTDVG…AQQQVPARPA (197 aa)) is disordered. Residues 54 to 63 (DSTDVGEEDS) are compositionally biased toward acidic residues. Residues 65-78 (LGQTSTHTSTPQTF) are compositionally biased toward polar residues. Residues 79–88 (SYFSQVSSSS) show a composition bias toward low complexity. 3 stretches are compositionally biased toward polar residues: residues 94 to 108 (IGQSPLTTSAMSAGQ), 143 to 158 (PPSQMGTSTYSPSQPS), and 232 to 241 (AMQSPAQQQV). Ser-600 is modified (phosphoserine). The SAM domain maps to 640–703 (EEPLTLHGTL…NFVKLKAAKL (64 aa)). Positions 720–742 (TKGQDESAPKTKEMASPSSESNE) are disordered. Basic and acidic residues predominate over residues 722–732 (GQDESAPKTKE). A phosphoserine mark is found at Ser-735, Ser-748, and Ser-924. Residues 777-987 (LDFEPEIFFA…ALLLLKEIYR (211 aa)) form the DDHD domain.

Belongs to the PA-PLA1 family. Interacts with SEC23A.

Its subcellular location is the cytoplasmic vesicle. It localises to the COPII-coated vesicle membrane. It is found in the endoplasmic reticulum. Functionally, plays a role in the organization of endoplasmic reticulum exit sites. Specifically binds to phosphatidylinositol 3-phosphate (PI(3)P), phosphatidylinositol 4-phosphate (PI(4)P) and phosphatidylinositol 5-phosphate (PI(5)P). The chain is SEC23-interacting protein (Sec23ip) from Mus musculus (Mouse).